Here is a 461-residue protein sequence, read N- to C-terminus: Glycerol-3-phosphate acyltransferase, chloroplastic (461 aa).

The transit peptide at 1 to 96 directs the protein to the chloroplast; sequence MSMTGSSAYY…SPPNMSASVS (96 aa). Residues 47–76 show a composition bias toward low complexity; that stretch reads LLSSTSSSSSSSISLRSSTAPSPSCSSVTP. A disordered region spans residues 47–88; that stretch reads LLSSTSSSSSSSISLRSSTAPSPSCSSVTPKDNCLASAKHSP. The short motif at 231–236 is the HXXXXD motif element; the sequence is HQTEAD.

Belongs to the GPAT/DAPAT family.

Its subcellular location is the plastid. It is found in the chloroplast stroma. It carries out the reaction sn-glycerol 3-phosphate + an acyl-CoA = a 1-acyl-sn-glycero-3-phosphate + CoA. It participates in phospholipid metabolism; CDP-diacylglycerol biosynthesis; CDP-diacylglycerol from sn-glycerol 3-phosphate: step 1/3. Functionally, esterifies acyl-group from acyl-ACP to the sn-1 position of glycerol-3-phosphate. The enzyme from chilling-resistant plants discriminates against non-fluid palmitic acid and selects oleic acid whereas the enzyme from sensitive plants accepts both fatty acids. This chain is Glycerol-3-phosphate acyltransferase, chloroplastic (PLSB), found in Phaseolus vulgaris (Kidney bean).